A 381-amino-acid chain; its full sequence is Arrestin-C (381 aa).

This sequence belongs to the arrestin family. Homodimer; disulfide-linked in response to retinal illumination. Interacts with CXCR4; the interaction is dependent on the C-terminal phosphorylation of CXCR4 and modulates the calcium ion mobilization activity of CXCR4. Interacts with GPR84. In terms of tissue distribution, inner and outer segments, and the inner plexiform regions of the retina.

The protein resides in the photoreceptor inner segment. The protein localises to the cell projection. Its subcellular location is the cilium. It localises to the photoreceptor outer segment. Functionally, may play a role in an as yet undefined retina-specific signal transduction. Could bind to photoactivated-phosphorylated red/green opsins. This Mus musculus (Mouse) protein is Arrestin-C (Arr3).